The sequence spans 570 residues: Protein misato homolog 1 (570 aa).

Ser495 carries the phosphoserine modification.

It belongs to the misato family. In terms of tissue distribution, present in all cell lines tested (at protein level). Widely expressed.

The protein localises to the mitochondrion outer membrane. It localises to the cytoplasm. Its function is as follows. Involved in the regulation of mitochondrial distribution and morphology. Required for mitochondrial fusion and mitochondrial network formation. The protein is Protein misato homolog 1 (MSTO1) of Homo sapiens (Human).